We begin with the raw amino-acid sequence, 476 residues long: Cytoplasmic 60S subunit biogenesis factor ZNF622 (476 aa).

A2 bears the N-acetylalanine mark. U1-type zinc fingers lie at residues 4–28 (LTCITCRVAFRDAELQRAHYKTDWH) and 69–93 (TYCTACGKKFATFNAYENHLGSRRH). Residues 137-243 (AIKAQPSTSP…AEDAAAEESP (107 aa)) form a disordered region. The span at 167 to 177 (VPERDPTEKPP) shows a compositional bias: basic and acidic residues. Over residues 195-239 (EDGEEEGEEEEEDDEDEDWEDIDSDDGLECEDPGVEDQDAEDAAA) the composition is skewed to acidic residues. S275 is subject to Phosphoserine.

The protein belongs to the REI1 family. As to quaternary structure, homo- and heterodimer. Associates with pre-60S ribosomal particles. Interacts with MELK and MYBL2. Interacts with DNAJC21. Phosphorylated by MELK. The phosphorylation may redirect the protein to the nucleus. In terms of processing, ubiquitinated by HECTD1, leading to its degradation.

It localises to the cytoplasm. Its subcellular location is the nucleus. Functionally, pre-60S-associated cytoplasmic factor involved in the cytoplasmic maturation of the 60S subunit. In Mus musculus (Mouse), this protein is Cytoplasmic 60S subunit biogenesis factor ZNF622 (Znf622).